A 535-amino-acid chain; its full sequence is Atrial natriuretic peptide receptor 3 (535 aa).

The signal sequence occupies residues 1 to 26 (MRSLLLFTFSACVLLARALLAGGASS). Positions 27–40 (GGGDTGPGNRRRER) are excised as a propeptide. Over 41–477 (EALAAQKIEV…CKSCGLEESA (437 aa)) the chain is Extracellular. N-linked (GlcNAc...) asparagine glycosylation is present at Asn81. 2 disulfides stabilise this stretch: Cys103-Cys131 and Cys208-Cys256. 2 N-linked (GlcNAc...) asparagine glycosylation sites follow: Asn288 and Asn389. Residues 478 to 498 (VTGIVVGALLGAGLLMAFYFF) traverse the membrane as a helical segment. The Cytoplasmic portion of the chain corresponds to 499 to 535 (RKKYRITIERRNHQEESNIGKHRELREDSIRSHFSVA).

The protein belongs to the ANF receptor family. As to quaternary structure, homodimer; disulfide-linked. Interacts with OSTN.

The protein localises to the cell membrane. In terms of biological role, receptor for the natriuretic peptide hormones, binding with similar affinities atrial natriuretic peptide NPPA/ANP, brain natriuretic peptide NPPB/BNP, and C-type natriuretic peptide NPPC/CNP. May function as a clearance receptor for NPPA, NPPB and NPPC, regulating their local concentrations and effects. Acts as a regulator of osteoblast differentiation and bone growth by binding to its ligand osteocrin, thereby preventing binding between NPR3/NPR-C and natriuretic peptides, leading to increase cGMP production. The protein is Atrial natriuretic peptide receptor 3 (Npr3) of Rattus norvegicus (Rat).